Consider the following 345-residue polypeptide: Adenine deaminase (345 aa).

Zn(2+) contacts are provided by His20, His22, and His204. Catalysis depends on Glu207, which acts as the Proton donor. Residue Asp285 coordinates Zn(2+). Asp286 is a binding site for substrate.

Belongs to the metallo-dependent hydrolases superfamily. Adenosine and AMP deaminases family. Adenine deaminase type 2 subfamily. Zn(2+) is required as a cofactor.

It catalyses the reaction adenine + H2O + H(+) = hypoxanthine + NH4(+). Catalyzes the hydrolytic deamination of adenine to hypoxanthine. Plays an important role in the purine salvage pathway and in nitrogen catabolism. The protein is Adenine deaminase of Ralstonia pickettii (strain 12J).